The primary structure comprises 137 residues: Small ribosomal subunit protein uS11A (137 aa).

Ser2 is modified (N-acetylserine). A disordered region spans residues 117–137 (DVTPVPSDSTRKKGGRRGRRL). A compositionally biased stretch (basic residues) spans 128 to 137 (KKGGRRGRRL).

It belongs to the universal ribosomal protein uS11 family. Component of the small ribosomal subunit (SSU). Mature yeast ribosomes consist of a small (40S) and a large (60S) subunit. The 40S small subunit contains 1 molecule of ribosomal RNA (18S rRNA) and 33 different proteins (encoded by 57 genes). The large 60S subunit contains 3 rRNA molecules (25S, 5.8S and 5S rRNA) and 46 different proteins (encoded by 81 genes). uS11 interacts with eS1 forming part of the mRNA exit tunnel. uS11 interacts with snoRNA U3. uS11 interacts with MPP10. Component of the ribosomal small subunit (SSU) processome composed of at least 40 protein subunits and snoRNA U3. In terms of processing, N-terminally acetylated by acetyltransferase NatA.

The protein resides in the cytoplasm. It localises to the nucleus. The protein localises to the nucleolus. Component of the ribosome, a large ribonucleoprotein complex responsible for the synthesis of proteins in the cell. The small ribosomal subunit (SSU) binds messenger RNAs (mRNAs) and translates the encoded message by selecting cognate aminoacyl-transfer RNA (tRNA) molecules. The large subunit (LSU) contains the ribosomal catalytic site termed the peptidyl transferase center (PTC), which catalyzes the formation of peptide bonds, thereby polymerizing the amino acids delivered by tRNAs into a polypeptide chain. The nascent polypeptides leave the ribosome through a tunnel in the LSU and interact with protein factors that function in enzymatic processing, targeting, and the membrane insertion of nascent chains at the exit of the ribosomal tunnel. uS11 is involved in nucleolar processing of pre-18S ribosomal RNA and ribosome assembly. This chain is Small ribosomal subunit protein uS11A, found in Saccharomyces cerevisiae (strain ATCC 204508 / S288c) (Baker's yeast).